Consider the following 427-residue polypeptide: Glutamate-1-semialdehyde 2,1-aminomutase (427 aa).

The residue at position 267 (lysine 267) is an N6-(pyridoxal phosphate)lysine.

Belongs to the class-III pyridoxal-phosphate-dependent aminotransferase family. HemL subfamily. As to quaternary structure, homodimer. The cofactor is pyridoxal 5'-phosphate.

Its subcellular location is the cytoplasm. It carries out the reaction (S)-4-amino-5-oxopentanoate = 5-aminolevulinate. Its pathway is porphyrin-containing compound metabolism; protoporphyrin-IX biosynthesis; 5-aminolevulinate from L-glutamyl-tRNA(Glu): step 2/2. The chain is Glutamate-1-semialdehyde 2,1-aminomutase from Geotalea uraniireducens (strain Rf4) (Geobacter uraniireducens).